We begin with the raw amino-acid sequence, 205 residues long: Holliday junction branch migration complex subunit RuvA (205 aa).

The tract at residues 1–64 (MIGKLKGTID…EDQLKLFGFL (64 aa)) is domain I. The interval 65-143 (SALEREWFRL…AFVGEMAPSI (79 aa)) is domain II. The tract at residues 144-153 (GLKQELGEGV) is flexible linker. Residues 153–205 (VAAAPVSDAVSALTNLGYSRDQAANAVAAALKNGGEGADSARLIRLGLKELSR) are domain III.

Belongs to the RuvA family. In terms of assembly, homotetramer. Forms an RuvA(8)-RuvB(12)-Holliday junction (HJ) complex. HJ DNA is sandwiched between 2 RuvA tetramers; dsDNA enters through RuvA and exits via RuvB. An RuvB hexamer assembles on each DNA strand where it exits the tetramer. Each RuvB hexamer is contacted by two RuvA subunits (via domain III) on 2 adjacent RuvB subunits; this complex drives branch migration. In the full resolvosome a probable DNA-RuvA(4)-RuvB(12)-RuvC(2) complex forms which resolves the HJ.

The protein localises to the cytoplasm. In terms of biological role, the RuvA-RuvB-RuvC complex processes Holliday junction (HJ) DNA during genetic recombination and DNA repair, while the RuvA-RuvB complex plays an important role in the rescue of blocked DNA replication forks via replication fork reversal (RFR). RuvA specifically binds to HJ cruciform DNA, conferring on it an open structure. The RuvB hexamer acts as an ATP-dependent pump, pulling dsDNA into and through the RuvAB complex. HJ branch migration allows RuvC to scan DNA until it finds its consensus sequence, where it cleaves and resolves the cruciform DNA. The chain is Holliday junction branch migration complex subunit RuvA from Sinorhizobium medicae (strain WSM419) (Ensifer medicae).